The sequence spans 335 residues: Dihydroorotate dehydrogenase (quinone) (335 aa).

FMN is bound by residues 58-62 (AGADK) and T82. K62 is a substrate binding site. Position 107–111 (107–111 (NRNGF)) interacts with substrate. FMN-binding residues include N135 and N168. N168 lines the substrate pocket. S171 functions as the Nucleophile in the catalytic mechanism. Position 173 (N173) interacts with substrate. Residues K213 and G241 each coordinate FMN. Substrate is bound at residue 242-243 (NT). FMN contacts are provided by residues G264, G293, and 314–315 (YS).

This sequence belongs to the dihydroorotate dehydrogenase family. Type 2 subfamily. As to quaternary structure, monomer. The cofactor is FMN.

The protein localises to the cell membrane. It carries out the reaction (S)-dihydroorotate + a quinone = orotate + a quinol. It functions in the pathway pyrimidine metabolism; UMP biosynthesis via de novo pathway; orotate from (S)-dihydroorotate (quinone route): step 1/1. Functionally, catalyzes the conversion of dihydroorotate to orotate with quinone as electron acceptor. This is Dihydroorotate dehydrogenase (quinone) from Haemophilus ducreyi (strain 35000HP / ATCC 700724).